The primary structure comprises 134 residues: Phosphoribosyl-AMP cyclohydrolase (134 aa).

A Mg(2+)-binding site is contributed by Asp-78. Cys-79 lines the Zn(2+) pocket. Mg(2+) is bound by residues Asp-80 and Asp-82. Residues Cys-96 and Cys-103 each coordinate Zn(2+).

This sequence belongs to the PRA-CH family. Homodimer. The cofactor is Mg(2+). Zn(2+) serves as cofactor.

The protein localises to the cytoplasm. It catalyses the reaction 1-(5-phospho-beta-D-ribosyl)-5'-AMP + H2O = 1-(5-phospho-beta-D-ribosyl)-5-[(5-phospho-beta-D-ribosylamino)methylideneamino]imidazole-4-carboxamide. It functions in the pathway amino-acid biosynthesis; L-histidine biosynthesis; L-histidine from 5-phospho-alpha-D-ribose 1-diphosphate: step 3/9. Functionally, catalyzes the hydrolysis of the adenine ring of phosphoribosyl-AMP. The protein is Phosphoribosyl-AMP cyclohydrolase of Cupriavidus taiwanensis (strain DSM 17343 / BCRC 17206 / CCUG 44338 / CIP 107171 / LMG 19424 / R1) (Ralstonia taiwanensis (strain LMG 19424)).